Reading from the N-terminus, the 363-residue chain is MYHIDVFRIPCHSPGDTSGLEDLIETGRVAPADIVAVMGKTEGNGCVNDYTREYATAMLAACLGRHLQLPPHEVEKRVAFVMSGGTEGVLSPHHTVFARRPAIDAHRPAGKRLTLGIAFTRDFLPEEIGRHAQITETAGAVKRAMRDAGIASIDDLHFVQVKCPLLTPAKIASARSRGCAPVTTDTYESMGYSRGASALGIALATEEVPSSMLVDESVLNDWSLSSSLASASAGIELEHNVVIAIGMSEQATSELVIAHGVMSDAIDAASVRRTIESLGIRSDDEMDRIVNVFAKAEASPDGVVRGMRHTMLSDSDINSTRHARAVTGAAIASVVGHGMVYVSGGAEHQGPAGGGPFAVIARA.

The interval 1 to 104 (MYHIDVFRIP…TVFARRPAID (104 aa)) is RU A. Substrate is bound by residues R52 and 83 to 84 (SG). Residues 112–249 (RLTLGIAFTR…NVVIAIGMSE (138 aa)) form an RU B region. K162 is a catalytic residue. Residues R194 and 232–233 (SA) each bind substrate. S232 serves as the catalytic Nucleophile. Positions 255–363 (LVIAHGVMSD…GGPFAVIARA (109 aa)) are RU C. E297 provides a ligand contact to Mg(2+). Substrate is bound by residues R324 and 343–344 (SG). Mg(2+) contacts are provided by A346, Q349, G350, P351, and G354.

Belongs to the cyclic amide hydrolase (CyAH) family. In terms of assembly, homotetramer.

The catalysed reaction is cyanurate + H2O = 1-carboxybiuret + H(+). The protein operates within xenobiotic degradation; atrazine degradation; biuret from cyanurate: step 1/1. Inhibited by barbituric acid. In terms of biological role, responsible for the hydrolysis of cyanuric acid, an intermediate formed during catabolism of s-triazine based compounds in herbicides such as atrazine and polymers such as melamine. Catalyzes the hydrolytic opening of the s-triazine ring of cyanuric acid (2,4,6-trihydroxy-s-triazine) to yield carbon dioxide and carboxybiuret, which spontaneously decarboxylates to biuret. The protein is Cyanuric acid amidohydrolase (atzD) of Pseudomonas sp. (strain ADP).